Here is a 139-residue protein sequence, read N- to C-terminus: Putative nickel-responsive regulator (139 aa).

Ni(2+) is bound by residues His-79, His-90, His-92, and Cys-98.

The protein belongs to the transcriptional regulatory CopG/NikR family. Requires Ni(2+) as cofactor.

Its function is as follows. Transcriptional regulator. This is Putative nickel-responsive regulator from Anaeromyxobacter dehalogenans (strain 2CP-1 / ATCC BAA-258).